The following is a 468-amino-acid chain: Aldehyde dehydrogenase family 3 member B1 (468 aa).

Met1 is modified (N-acetylmethionine). NAD(+) is bound at residue 188 to 193; sequence GNAYVG. Active-site residues include Glu210 and Cys244. Residues Cys462 and Cys463 are each lipidated (S-palmitoyl cysteine). Residue Cys465 is modified to Cysteine methyl ester. Cys465 carries the S-geranylgeranyl cysteine lipid modification. Residues 466-468 constitute a propeptide, removed in mature form; sequence TLL.

It belongs to the aldehyde dehydrogenase family. Dually lipidated in the C-terminus; prenylation occurs prior to, and is a prerequisite for palmitoylation. It is also required for activity towards long-chain substrates. As to expression, highly expressed in kidney and liver. In brain is expressed at moderate levels in cortex, striatum and hippocampus, and at lower levels in brainstem and cerebellum.

It localises to the cell membrane. The catalysed reaction is an aldehyde + NAD(+) + H2O = a carboxylate + NADH + 2 H(+). The enzyme catalyses a long-chain fatty aldehyde + NAD(+) + H2O = a long-chain fatty acid + NADH + 2 H(+). It catalyses the reaction a medium-chain fatty aldehyde + NAD(+) + H2O = a medium-chain fatty acid + NADH + 2 H(+). It carries out the reaction octanal + NAD(+) + H2O = octanoate + NADH + 2 H(+). The catalysed reaction is nonanal + NAD(+) + H2O = nonanoate + NADH + 2 H(+). The enzyme catalyses hexadecanoate + NADH + 2 H(+) = hexadecanal + NAD(+) + H2O. It catalyses the reaction (2E)-octenal + NAD(+) + H2O = (2E)-octenoate + NADH + 2 H(+). It carries out the reaction (E)-non-2-enal + NAD(+) + H2O = (E)-non-2-enoate + NADH + 2 H(+). The catalysed reaction is (E)-4-hydroxynon-2-enal + NAD(+) + H2O = (E)-4-hydroxynon-2-enoate + NADH + 2 H(+). The enzyme catalyses (2E)-hexadecenal + NAD(+) + H2O = (E)-hexadec-2-enoate + NADH + 2 H(+). It catalyses the reaction benzaldehyde + NAD(+) + H2O = benzoate + NADH + 2 H(+). It carries out the reaction an aldehyde + NADP(+) + H2O = a carboxylate + NADPH + 2 H(+). The catalysed reaction is a medium-chain fatty aldehyde + NADP(+) + H2O = a medium-chain fatty acid + NADPH + 2 H(+). The enzyme catalyses hexanal + NADP(+) + H2O = hexanoate + NADPH + 2 H(+). It catalyses the reaction octanal + NADP(+) + H2O = octanoate + NADPH + 2 H(+). It carries out the reaction nonanal + NADP(+) + H2O = nonanoate + NADPH + 2 H(+). The catalysed reaction is (2E)-octenal + NADP(+) + H2O = (2E)-octenoate + NADPH + 2 H(+). The enzyme catalyses (E)-non-2-enal + NADP(+) + H2O = (E)-non-2-enoate + NADPH + 2 H(+). It catalyses the reaction (E)-4-hydroxynon-2-enal + NADP(+) + H2O = (E)-4-hydroxynon-2-enoate + NADPH + 2 H(+). It carries out the reaction benzaldehyde + NADP(+) + H2O = benzoate + NADPH + 2 H(+). It participates in alcohol metabolism; ethanol degradation; acetate from ethanol: step 2/2. Its function is as follows. Oxidizes medium and long chain saturated and unsaturated fatty aldehydes generated in the plasma membrane into non-toxic fatty acids. May have a protective role against the cytotoxicity induced by lipid peroxidation. Short-chain fatty aldehydes are not good substrates. Can use both NADP(+) and NAD(+) as electron acceptor in vitro, however in vivo preference will depend on their tissue levels. Low activity towards acetaldehyde and 3,4-dihydroxyphenylacetaldehyde. Able to metabolize aromatic aldehydes such as benzaldehyde to their acid form. The protein is Aldehyde dehydrogenase family 3 member B1 (Aldh3b1) of Mus musculus (Mouse).